Reading from the N-terminus, the 22-residue chain is Large ribosomal subunit protein bL32 (22 aa).

Positions 1–22 (CVPKRKVSPSXRNMRXAHDXLT) are disordered.

It belongs to the bacterial ribosomal protein bL32 family.

The protein is Large ribosomal subunit protein bL32 (rpmF) of Brevundimonas vesicularis (Pseudomonas vesicularis).